Reading from the N-terminus, the 713-residue chain is Protein-glucosylgalactosylhydroxylysine glucosidase (713 aa).

Residues 1–21 (MIINSQEYLQPPQWWNERVEA) form the signal peptide. N104, N160, N171, N186, and N283 each carry an N-linked (GlcNAc...) asparagine glycan. 317-318 (WD) contributes to the substrate binding site. Residue N361 is glycosylated (N-linked (GlcNAc...) asparagine). E451 functions as the Proton donor in the catalytic mechanism. Residues N457 and N481 are each glycosylated (N-linked (GlcNAc...) asparagine). Residue 521-522 (KQ) coordinates substrate. N-linked (GlcNAc...) asparagine glycosylation is found at N535, N576, and N662.

The protein belongs to the glycosyl hydrolase 65 family.

The protein resides in the secreted. The enzyme catalyses (5R)-5-O-[alpha-D-glucosyl-(1-&gt;2)-beta-D-galactosyl]-5-hydroxy-L-lysyl-[collagen] + H2O = (5R)-5-O-(beta-D-galactosyl)-5-hydroxy-L-lysyl-[collagen] + D-glucose. In terms of biological role, catalyzes the hydrolysis of glucose from the disaccharide unit linked to hydroxylysine residues of collagen and collagen-like proteins. This chain is Protein-glucosylgalactosylhydroxylysine glucosidase, found in Dictyostelium discoideum (Social amoeba).